A 498-amino-acid chain; its full sequence is Lipase 3 (498 aa).

Cysteine 60 and cysteine 91 are oxidised to a cystine. The N-linked (GlcNAc...) asparagine glycan is linked to asparagine 193. Catalysis depends on serine 200, which acts as the Acyl-ester intermediate. A glycan (N-linked (GlcNAc...) asparagine) is linked at asparagine 384. Histidine 409 functions as the Charge relay system in the catalytic mechanism. The N-linked (GlcNAc...) asparagine glycan is linked to asparagine 418.

It belongs to the type-B carboxylesterase/lipase family.

The catalysed reaction is a triacylglycerol + H2O = a diacylglycerol + a fatty acid + H(+). The chain is Lipase 3 (LIP3) from Yarrowia lipolytica (strain CLIB 122 / E 150) (Yeast).